The primary structure comprises 452 residues: Pup--protein ligase (452 aa).

Mg(2+) is bound at residue Glu9. Arg53 lines the ATP pocket. Mg(2+) is bound at residue Tyr55. The active-site Proton acceptor is the Asp57. Residue Glu63 participates in Mg(2+) binding. Thr66 and Trp419 together coordinate ATP.

This sequence belongs to the Pup ligase/Pup deamidase family. Pup-conjugating enzyme subfamily.

The catalysed reaction is ATP + [prokaryotic ubiquitin-like protein]-L-glutamate + [protein]-L-lysine = ADP + phosphate + N(6)-([prokaryotic ubiquitin-like protein]-gamma-L-glutamyl)-[protein]-L-lysine.. Its pathway is protein degradation; proteasomal Pup-dependent pathway. It functions in the pathway protein modification; protein pupylation. Functionally, catalyzes the covalent attachment of the prokaryotic ubiquitin-like protein modifier Pup to the proteasomal substrate proteins, thereby targeting them for proteasomal degradation. This tagging system is termed pupylation. The ligation reaction involves the side-chain carboxylate of the C-terminal glutamate of Pup and the side-chain amino group of a substrate lysine. This Nocardia farcinica (strain IFM 10152) protein is Pup--protein ligase.